The primary structure comprises 201 residues: 3-isopropylmalate dehydratase small subunit (201 aa).

It belongs to the LeuD family. LeuD type 1 subfamily. Heterodimer of LeuC and LeuD.

It carries out the reaction (2R,3S)-3-isopropylmalate = (2S)-2-isopropylmalate. Its pathway is amino-acid biosynthesis; L-leucine biosynthesis; L-leucine from 3-methyl-2-oxobutanoate: step 2/4. In terms of biological role, catalyzes the isomerization between 2-isopropylmalate and 3-isopropylmalate, via the formation of 2-isopropylmaleate. The polypeptide is 3-isopropylmalate dehydratase small subunit (Shigella flexneri serotype 5b (strain 8401)).